The chain runs to 397 residues: Probable transport protein MmpL6 (397 aa).

The next 5 helical transmembrane spans lie at 190–210 (YDLLIAGIAALSLILLIMMII), 214–234 (LVAALVIVGTVALSLGASFGL), 242–262 (LLGIQLYWIVLALAVILLLAV), 293–313 (TGGVVTAAGLVFAATMSSFVF), and 328–348 (LGLLFDTLVVRAFMTPSIAVL).

This sequence belongs to the resistance-nodulation-cell division (RND) (TC 2.A.6) family. MmpL subfamily.

It is found in the cell membrane. The polypeptide is Probable transport protein MmpL6 (mmpL6) (Mycobacterium tuberculosis (strain CDC 1551 / Oshkosh)).